Consider the following 437-residue polypeptide: Ribosomal protein uS12 methylthiotransferase RimO (437 aa).

The MTTase N-terminal domain maps to 3 to 114 (ATIAVTHLGC…IVEVVERSRT (112 aa)). Residues C12, C48, C77, C152, C156, and C159 each contribute to the [4Fe-4S] cluster site. The 230-residue stretch at 138–367 (TTTEAVAYLK…MRLQQTISQR (230 aa)) folds into the Radical SAM core domain. The region spanning 370–436 (ASQVGRVVPV…PYDLCGEVFQ (67 aa)) is the TRAM domain.

Belongs to the methylthiotransferase family. RimO subfamily. It depends on [4Fe-4S] cluster as a cofactor.

The protein localises to the cytoplasm. It catalyses the reaction L-aspartate(89)-[ribosomal protein uS12]-hydrogen + (sulfur carrier)-SH + AH2 + 2 S-adenosyl-L-methionine = 3-methylsulfanyl-L-aspartate(89)-[ribosomal protein uS12]-hydrogen + (sulfur carrier)-H + 5'-deoxyadenosine + L-methionine + A + S-adenosyl-L-homocysteine + 2 H(+). Catalyzes the methylthiolation of an aspartic acid residue of ribosomal protein uS12. The protein is Ribosomal protein uS12 methylthiotransferase RimO of Gloeobacter violaceus (strain ATCC 29082 / PCC 7421).